The chain runs to 213 residues: MKALKVPEATITRLSVYSRFLERMDRNGIVTVSSGEIAEGVGVSSAQVRKDLAYFGEFGTRGVGYNVKDLMHYTSKILGLNEPWPIVLAGAGNLGFALCTYKGFNDRGFTIVGVFDNDLTKIGKKIVDLEVYPPERMPEVIAKHKVRIGIIAVPARAAQEVADQMVKNGLQAILNFAPVVLNVPDHVLLRNVDLSVSLEVLTFNLVQKESQAG.

The segment at residues 16 to 55 (VYSRFLERMDRNGIVTVSSGEIAEGVGVSSAQVRKDLAYF) is a DNA-binding region (H-T-H motif). 90 to 95 (GAGNLG) contacts NAD(+).

It belongs to the transcriptional regulatory Rex family. Homodimer.

Its subcellular location is the cytoplasm. In terms of biological role, modulates transcription in response to changes in cellular NADH/NAD(+) redox state. The protein is Redox-sensing transcriptional repressor Rex of Pelotomaculum thermopropionicum (strain DSM 13744 / JCM 10971 / SI).